A 145-amino-acid polypeptide reads, in one-letter code: Large ribosomal subunit protein uL11 (145 aa).

It belongs to the universal ribosomal protein uL11 family. Part of the ribosomal stalk of the 50S ribosomal subunit. Interacts with L10 and the large rRNA to form the base of the stalk. L10 forms an elongated spine to which L12 dimers bind in a sequential fashion forming a multimeric L10(L12)X complex. In terms of processing, one or more lysine residues are methylated.

Functionally, forms part of the ribosomal stalk which helps the ribosome interact with GTP-bound translation factors. The sequence is that of Large ribosomal subunit protein uL11 from Hydrogenobaculum sp. (strain Y04AAS1).